A 238-amino-acid polypeptide reads, in one-letter code: tRNA (guanine-N(7)-)-methyltransferase (238 aa).

The S-adenosyl-L-methionine site is built by glutamate 70, aspartate 95, aspartate 122, and aspartate 145. The active site involves aspartate 145. Residues lysine 149, aspartate 181, and 216–219 each bind substrate; that span reads TKFE.

This sequence belongs to the class I-like SAM-binding methyltransferase superfamily. TrmB family.

The catalysed reaction is guanosine(46) in tRNA + S-adenosyl-L-methionine = N(7)-methylguanosine(46) in tRNA + S-adenosyl-L-homocysteine. The protein operates within tRNA modification; N(7)-methylguanine-tRNA biosynthesis. In terms of biological role, catalyzes the formation of N(7)-methylguanine at position 46 (m7G46) in tRNA. The protein is tRNA (guanine-N(7)-)-methyltransferase of Neisseria meningitidis serogroup C / serotype 2a (strain ATCC 700532 / DSM 15464 / FAM18).